The following is a 2007-amino-acid chain: Structural maintenance of chromosomes flexible hinge domain-containing protein 1 (2007 aa).

An N-acetylalanine modification is found at A2. Residues 111–702 are ATPase activity domain; it reads TKERIDFLPH…LSVTWPEGDE (592 aa). A Phosphoserine modification is found at S833. The residue at position 1350 (K1350) is an N6-acetyllysine. Residue K1375 forms a Glycyl lysine isopeptide (Lys-Gly) (interchain with G-Cter in SUMO2) linkage. The residue at position 1500 (T1500) is a Phosphothreonine. The region spanning 1721 to 1848 is the SMC hinge domain; sequence GDILGKIAHL…DNLDAANHYR (128 aa). Residue K1803 is modified to N6-succinyllysine. Residue S1975 is modified to Phosphoserine. The interval 1984-2007 is disordered; the sequence is PIPTKRMRRESTRQNRRPKGDVPN.

The protein belongs to the SMC family. Highly divergent. Homodimer; homodimerizes via its SMC hinge domain. Interacts with LRIF1. In terms of processing, sumoylated with SUMO1. In terms of tissue distribution, during embryogenesis, specifically expressed in immature olfactory sensory neurons.

The protein resides in the chromosome. It carries out the reaction ATP + H2O = ADP + phosphate + H(+). Functionally, non-canonical member of the structural maintenance of chromosomes (SMC) protein family that plays a key role in epigenetic silencing by regulating chromatin architecture. Promotes heterochromatin formation in both autosomes and chromosome X, probably by mediating the merge of chromatin compartments. Plays a key role in chromosome X inactivation in females by promoting the spreading of heterochromatin. Recruited to inactivated chromosome X by Xist RNA and acts by mediating the merge of chromatin compartments: promotes random chromatin interactions that span the boundaries of existing structures, leading to create a compartment-less architecture typical of inactivated chromosome X. Required to facilitate Xist RNA spreading. Also required for silencing of a subset of clustered autosomal loci in somatic cells, such as the DUX4 locus. Has ATPase activity; may participate in structural manipulation of chromatin in an ATP-dependent manner as part of its role in gene expression regulation. Also plays a role in DNA repair: localizes to sites of DNA double-strand breaks in response to DNA damage to promote the repair of DNA double-strand breaks. Acts by promoting non-homologous end joining (NHEJ) and inhibiting homologous recombination (HR) repair. Required during preimplantation development, probably acts by regulating chromatin architecture. The protein is Structural maintenance of chromosomes flexible hinge domain-containing protein 1 of Mus musculus (Mouse).